The primary structure comprises 240 residues: Intestine-specific homeobox (240 aa).

Residues 36–82 form a disordered region; that stretch reads PTERRSLPRPQSICKEDSRQTTIPGSKLERPPQDQPQEEKKNKRRVR. Over residues 62-76 the composition is skewed to basic and acidic residues; sequence KLERPPQDQPQEEKK. A DNA-binding region (homeobox) is located at residues 78 to 137; it reads KRRVRTTFTTEQLQELEKLFHFTHYPDIHVRSQLASRINLPEARVQIWFQNQRAKWRKQE.

As to expression, expressed in intestinal epithelial cells from the duodenum to the proximal colon.

It localises to the nucleus. Functionally, transcription factor that regulates gene expression in intestine. May participate in vitamin A metabolism most likely by regulating BCO1 expression in the intestine. The protein is Intestine-specific homeobox (Isx) of Mus musculus (Mouse).